A 201-amino-acid chain; its full sequence is Ras-related protein Rab-9A (201 aa).

An N-acetylalanine modification is found at alanine 2. GTP is bound by residues glycine 17, valine 18, glycine 19, lysine 20, serine 21, serine 22, aspartate 33, serine 34, histidine 38, and threonine 39. Position 21 (serine 21) interacts with Mg(2+). Positions 31–42 (KFDSQLFHTIGV) match the Switch 1 motif. Serine 34 carries the post-translational modification Phosphoserine. Mg(2+) contacts are provided by threonine 39 and aspartate 62. A Switch 2 motif is present at residues 64–78 (AGQERFRSLRTPFYR). Positions 65, 124, 125, 127, 155, and 156 each coordinate GTP. Serine 179 carries the post-translational modification Phosphoserine. Threonine 187 is modified (phosphothreonine). S-geranylgeranyl cysteine attachment occurs at residues cysteine 200 and cysteine 201.

This sequence belongs to the small GTPase superfamily. Rab family. As to quaternary structure, interacts (preferentially in its GTP-bound form) with GCC2 (via its GRIP domain). Interacts (GTP-bound form) with SGSM1; the GDP-bound form has much lower affinity for SGSM1. Interacts with SGSM2. The GTP-bound form but not the GDP-bound form interacts with HPS4. The GTP-bound form but not the GDP-bound form interacts with BLOC-3 complex (heterodimer of HPS1 and HPS4) but does not interact with HPS1 alone. Interacts (GTP-bound form) with NDE1; two RAB9A-GTP molecules lie on the opposite sides of the NDE1 homodimer; the interaction leads to RAB9A-dynein motor tethering. Interacts (GTP-bound form) with NDEL1. The cofactor is Mg(2+).

The protein localises to the cell membrane. The protein resides in the endoplasmic reticulum membrane. It localises to the golgi apparatus membrane. It is found in the late endosome. Its subcellular location is the cytoplasmic vesicle. The protein localises to the phagosome membrane. The protein resides in the phagosome. It localises to the cytoplasmic vesicle membrane. It is found in the melanosome. It carries out the reaction GTP + H2O = GDP + phosphate + H(+). With respect to regulation, regulated by guanine nucleotide exchange factors (GEFs) which promote the exchange of bound GDP for free GTP. Regulated by GTPase activating proteins (GAPs) which increase the GTP hydrolysis activity. Inhibited by GDP dissociation inhibitors (GDIs). Its function is as follows. The small GTPases Rab are key regulators of intracellular membrane trafficking, from the formation of transport vesicles to their fusion with membranes. Rabs cycle between an inactive GDP-bound form and an active GTP-bound form that is able to recruit to membranes different sets of downstream effectors directly responsible for vesicle formation, movement, tethering and fusion. RAB9A is involved in the transport of proteins between the endosomes and the trans-Golgi network (TGN). Specifically uses NDE1/NDEL1 as an effector to interact with the dynein motor complex in order to control retrograde trafficking of RAB9-associated late endosomes to the TGN. Involved in the recruitment of SGSM2 to melanosomes and is required for the proper trafficking of melanogenic enzymes TYR, TYRP1 and DCT/TYRP2 to melanosomes in melanocytes. The protein is Ras-related protein Rab-9A of Mus musculus (Mouse).